Consider the following 238-residue polypeptide: ATP-dependent Clp protease proteolytic subunit 4 (238 aa).

The active-site Nucleophile is S113. H138 is a catalytic residue.

Belongs to the peptidase S14 family. In terms of assembly, fourteen ClpP subunits assemble into 2 heptameric rings which stack back to back to give a disk-like structure with a central cavity, resembling the structure of eukaryotic proteasomes.

It is found in the cytoplasm. It carries out the reaction Hydrolysis of proteins to small peptides in the presence of ATP and magnesium. alpha-casein is the usual test substrate. In the absence of ATP, only oligopeptides shorter than five residues are hydrolyzed (such as succinyl-Leu-Tyr-|-NHMec, and Leu-Tyr-Leu-|-Tyr-Trp, in which cleavage of the -Tyr-|-Leu- and -Tyr-|-Trp bonds also occurs).. Functionally, cleaves peptides in various proteins in a process that requires ATP hydrolysis. Has a chymotrypsin-like activity. Plays a major role in the degradation of misfolded proteins. This is ATP-dependent Clp protease proteolytic subunit 4 from Frankia casuarinae (strain DSM 45818 / CECT 9043 / HFP020203 / CcI3).